The chain runs to 115 residues: Large ribosomal subunit protein uL22 (115 aa).

This sequence belongs to the universal ribosomal protein uL22 family. As to quaternary structure, part of the 50S ribosomal subunit.

In terms of biological role, this protein binds specifically to 23S rRNA; its binding is stimulated by other ribosomal proteins, e.g. L4, L17, and L20. It is important during the early stages of 50S assembly. It makes multiple contacts with different domains of the 23S rRNA in the assembled 50S subunit and ribosome. Its function is as follows. The globular domain of the protein is located near the polypeptide exit tunnel on the outside of the subunit, while an extended beta-hairpin is found that lines the wall of the exit tunnel in the center of the 70S ribosome. The chain is Large ribosomal subunit protein uL22 from Lactiplantibacillus plantarum (strain ATCC BAA-793 / NCIMB 8826 / WCFS1) (Lactobacillus plantarum).